We begin with the raw amino-acid sequence, 637 residues long: Sphingomyelin phosphodiesterase B (637 aa).

A signal peptide spans Met-1–Ser-20. N-linked (GlcNAc...) asparagine glycosylation occurs at Asn-73. The 83-residue stretch at Asn-73–Pro-155 folds into the Saposin B-type domain. Intrachain disulfides connect Cys-77-Cys-151, Cys-80-Cys-145, and Cys-108-Cys-119. N-linked (GlcNAc...) asparagine glycans are attached at residues Asn-128 and Asn-157. The Zn(2+) site is built by Asp-191 and His-193. A disulfide bond links Cys-212 and Cys-233. A Zn(2+)-binding site is contributed by Asp-263. Asn-279 carries an N-linked (GlcNAc...) asparagine glycan. A Zn(2+)-binding site is contributed by Asn-304. N-linked (GlcNAc...) asparagine glycosylation is present at Asn-377. Zn(2+) contacts are provided by His-407, His-441, and His-443. Asn-523 and Asn-546 each carry an N-linked (GlcNAc...) asparagine glycan. The cysteines at positions 582 and 595 are disulfide-linked. An N-linked (GlcNAc...) asparagine glycan is attached at Asn-606.

This sequence belongs to the acid sphingomyelinase family. The cofactor is Zn(2+).

It localises to the secreted. In terms of biological role, converts sphingomyelin to ceramide. The protein is Sphingomyelin phosphodiesterase B (sgmB) of Dictyostelium discoideum (Social amoeba).